The following is a 680-amino-acid chain: MATTRYNSNDFRRQLGSPRPKGRADTKDTLCRNILIYGHCRYEDAGCAFNHDQTKKSPKPDATTRKTLNVDSAPFTPAVSSQPSKKTFSSSHAASAAVFTPRATAATPTGTPTAQETDIPPAANTPSAFSNIAAIREFTPQQQNYDLTTNGAAAATQDASLNYDPFTMSSVASALPAAQYNPYASTDHTGLVAHGGAYFPSAQAGYQSLIPPSFHLYAPIGPYREDLQPWQRSTYDFFMPENLRLELQNKSHAALQTMTGTAALQMPQVGNYHTLVTLDKTSNRKSSSLFGYVTWVYKAVSGKTSRLYSLRRLEGFTVSNDQILRPVKEWKKITNGNIVAMQDAFTTRAWGDSSLMFSFEYYPLAETLMEHHFPNAQHKTSFRSNTNHQASETVLWSYIVQISNALNSIHSNGLAARCIDATKIIITGKNHIRLSSCGILDVINYEKSKPMTELQEEDFVAFGKLIVSLATNTPPTGLNLGKAIEQMGRNHSSTLKDMVLWLLNPPQASGQKTVKNLVAGINEHVMTAFDAQQRQSDMLYSELYREVENGRVLRLLMKLATINERTEYDKDAGWSENGDRYMLKLFRDYVFHQVDAQGRPVLDPGHMLRCLSKLDVGTEERIKLTSRDCETDFLVTYKDLKGAVQSAFGELLKGSGNGRGGPVASGSGHGVHHPSHRDRF.

3 disordered regions span residues M1–T26, H51–T87, and F99–P120. The segment at D25 to T54 adopts a C3H1-type zinc-finger fold. Residues D52–T64 show a composition bias toward basic and acidic residues. The PABPC-interacting motif-2 (PAM-2) motif lies at A62–Q82. Positions F99–T117 are enriched in low complexity. Residues Q256–N522 are pseudokinase domain. ATP-binding positions include R311, E360–T367, and T422–K423. Positions E523 to T561 form a coiled coil. Residues I562–F680 form a knob domain region. A compositionally biased stretch (gly residues) spans S655–H669. Residues S655–F680 are disordered. The span at G670–F680 shows a compositional bias: basic residues.

Belongs to the protein kinase superfamily. PAN3 family. Homodimer. Forms a heterotrimer with a catalytic subunit PAN2 to form the poly(A)-nuclease (PAN) deadenylation complex. Interacts (via PAM-2 motif) with poly(A)-binding protein PAB1 (via PABC domain), conferring substrate specificity of the enzyme complex.

It localises to the cytoplasm. Its function is as follows. Regulatory subunit of the poly(A)-nuclease (PAN) deadenylation complex, one of two cytoplasmic mRNA deadenylases involved in mRNA turnover. PAN specifically shortens poly(A) tails of RNA and the activity is stimulated by poly(A)-binding protein PAB1. PAN deadenylation is followed by rapid degradation of the shortened mRNA tails by the CCR4-NOT complex. Deadenylated mRNAs are then degraded by two alternative mechanisms, namely exosome-mediated 3'-5' exonucleolytic degradation, or deadenylation-dependent mRNA decaping and subsequent 5'-3' exonucleolytic degradation by XRN1. May also be involved in post-transcriptional maturation of mRNA poly(A) tails. PAN3 acts as a positive regulator for PAN activity, recruiting the catalytic subunit PAN2 to mRNA via its interaction with RNA and with PAB1. The sequence is that of PAN2-PAN3 deadenylation complex subunit PAN3 from Pyricularia oryzae (strain 70-15 / ATCC MYA-4617 / FGSC 8958) (Rice blast fungus).